An 811-amino-acid chain; its full sequence is Bifunctional enzyme MurC/Ddl (811 aa).

The UDP-N-acetylmuramate--alanine ligase stretch occupies residues methionine 1–lysine 450. ATP is bound by residues glycine 111–threonine 117 and leucine 607–isoleucine 662. The segment at lysine 451–serine 811 is D-alanine--D-alanine ligase. The ATP-grasp domain maps to lysine 574–isoleucine 785. Mg(2+) contacts are provided by aspartate 739, glutamate 752, and asparagine 754.

In the N-terminal section; belongs to the MurCDEF family. This sequence in the C-terminal section; belongs to the D-alanine--D-alanine ligase family. Mg(2+) is required as a cofactor. The cofactor is Mn(2+).

It localises to the cytoplasm. It carries out the reaction UDP-N-acetyl-alpha-D-muramate + L-alanine + ATP = UDP-N-acetyl-alpha-D-muramoyl-L-alanine + ADP + phosphate + H(+). The enzyme catalyses 2 D-alanine + ATP = D-alanyl-D-alanine + ADP + phosphate + H(+). It participates in cell wall biogenesis; peptidoglycan biosynthesis. This is Bifunctional enzyme MurC/Ddl (murC/ddlA) from Chlamydia caviae (strain ATCC VR-813 / DSM 19441 / 03DC25 / GPIC) (Chlamydophila caviae).